Here is a 293-residue protein sequence, read N- to C-terminus: MVWRTLVASNFSTCPNGSIQWIWDVFGECAQDGWDEASVALGLVSIFCFAASTFPQYIKACKTGNMDQALSLWFLLGWIGGDSCNLIGSFLADQLPLQTYTAVYYVLADLLMLTLYFHYKFKKQPSLLSAPINSVLLFILGTVCITPLLSSTDPVAVPREGFRGRTLLSVEPGNKPFTKKEVVGFVIGSASSVLYLLSRLPQIRTNFVRQSTQGISYSLFALVMLGNTLYGLSVLLKNPEVGQSEGSYLLHHLPWLVGSLGVLLLDTIISIQFLVYRSHDADAASEREPLLPS.

Topologically, residues 1–37 (MVWRTLVASNFSTCPNGSIQWIWDVFGECAQDGWDEA) are lumenal. Asn-10 carries N-linked (GlcNAc...) asparagine glycosylation. The 67-residue stretch at 34-100 (WDEASVALGL…LADQLPLQTY (67 aa)) folds into the PQ-loop 1 domain. Residues 38 to 58 (SVALGLVSIFCFAASTFPQYI) traverse the membrane as a helical segment. Topologically, residues 59–71 (KACKTGNMDQALS) are cytoplasmic. A helical membrane pass occupies residues 72–92 (LWFLLGWIGGDSCNLIGSFLA). Residues 93–96 (DQLP) are Lumenal-facing. Residues 97–117 (LQTYTAVYYVLADLLMLTLYF) traverse the membrane as a helical segment. Residues 118-126 (HYKFKKQPS) lie on the Cytoplasmic side of the membrane. Residues 127 to 147 (LLSAPINSVLLFILGTVCITP) traverse the membrane as a helical segment. Over 148–182 (LLSSTDPVAVPREGFRGRTLLSVEPGNKPFTKKEV) the chain is Lumenal. The helical transmembrane segment at 183–203 (VGFVIGSASSVLYLLSRLPQI) threads the bilayer. The PQ-loop 2 domain maps to 191 to 243 (SSVLYLLSRLPQIRTNFVRQSTQGISYSLFALVMLGNTLYGLSVLLKNPEVGQ). At 204 to 214 (RTNFVRQSTQG) the chain is on the cytoplasmic side. A helical membrane pass occupies residues 215–235 (ISYSLFALVMLGNTLYGLSVL). Residues 236–254 (LKNPEVGQSEGSYLLHHLP) are Lumenal-facing. A helical transmembrane segment spans residues 255–275 (WLVGSLGVLLLDTIISIQFLV). The Cytoplasmic portion of the chain corresponds to 276–293 (YRSHDADAASEREPLLPS). The Di-leucine motif signature appears at 290 to 291 (LL).

The protein belongs to the laat-1 family.

It is found in the lysosome membrane. In terms of biological role, amino acid transporter that specifically mediates the pH-dependent export of the cationic amino acids arginine, histidine and lysine from lysosomes. This is Lysosomal amino acid transporter 1 homolog (Slc66a1) from Rattus norvegicus (Rat).